The chain runs to 391 residues: Curcumin synthase 2 (391 aa).

Residue C166 is part of the active site.

The protein belongs to the thiolase-like superfamily. Chalcone/stilbene synthases family. In terms of assembly, homodimer.

The enzyme catalyses (E)-feruloylacetyl-CoA + (E)-feruloyl-CoA + H2O = curcumin + CO2 + 2 CoA. It functions in the pathway secondary metabolite biosynthesis; flavonoid biosynthesis. Functionally, catalyzes the synthesis of curcumin by condensing feruloyl-CoA with a diketide-CoA in the curcuminoid biosynthesis. The protein is Curcumin synthase 2 (CURS2) of Curcuma longa (Turmeric).